Here is a 208-residue protein sequence, read N- to C-terminus: Peptidyl-tRNA hydrolase 2 (208 aa).

Residues 32–45 (SNASSTKKSSATLL) are compositionally biased toward low complexity. The tract at residues 32–81 (SNASSTKKSSATLLRSKEMKEGKLHNDTDEEESESEDESDEDEDIESTSL) is disordered. The span at 46 to 58 (RSKEMKEGKLHND) shows a compositional bias: basic and acidic residues. Over residues 59–77 (TDEEESESEDESDEDEDIE) the composition is skewed to acidic residues. K152 is covalently cross-linked (Glycyl lysine isopeptide (Lys-Gly) (interchain with G-Cter in ubiquitin)).

This sequence belongs to the PTH2 family.

Its subcellular location is the cytoplasm. It carries out the reaction an N-acyl-L-alpha-aminoacyl-tRNA + H2O = an N-acyl-L-amino acid + a tRNA + H(+). The natural substrate for this enzyme may be peptidyl-tRNAs which drop off the ribosome during protein synthesis. The chain is Peptidyl-tRNA hydrolase 2 from Saccharomyces cerevisiae (strain ATCC 204508 / S288c) (Baker's yeast).